A 428-amino-acid polypeptide reads, in one-letter code: Histidine--tRNA ligase (428 aa).

This sequence belongs to the class-II aminoacyl-tRNA synthetase family. As to quaternary structure, homodimer.

It is found in the cytoplasm. It carries out the reaction tRNA(His) + L-histidine + ATP = L-histidyl-tRNA(His) + AMP + diphosphate + H(+). The protein is Histidine--tRNA ligase of Chromohalobacter salexigens (strain ATCC BAA-138 / DSM 3043 / CIP 106854 / NCIMB 13768 / 1H11).